Here is a 143-residue protein sequence, read N- to C-terminus: Class I hydrophobin 20 (143 aa).

The signal sequence occupies residues 1-22 (MLSHPMKLLFFVFALSALLAAA). 4 disulfide bridges follow: Cys-54-Cys-123, Cys-62-Cys-117, Cys-63-Cys-102, and Cys-124-Cys-137.

Belongs to the fungal hydrophobin family. As to quaternary structure, self-assembles to form functional amyloid fibrils called rodlets. Self-assembly into fibrillar rodlets occurs spontaneously at hydrophobic:hydrophilic interfaces and the rodlets further associate laterally to form amphipathic monolayers.

The protein resides in the secreted. It localises to the cell wall. Aerial growth, conidiation, and dispersal of filamentous fungi in the environment rely upon a capability of their secreting small amphipathic proteins called hydrophobins (HPBs) with low sequence identity. Class I can self-assemble into an outermost layer of rodlet bundles on aerial cell surfaces, conferring cellular hydrophobicity that supports fungal growth, development and dispersal; whereas Class II form highly ordered films at water-air interfaces through intermolecular interactions but contribute nothing to the rodlet structure. Hydph20 is a class I hydrophobin involved in mycelial growth. The polypeptide is Class I hydrophobin 20 (Pleurotus ostreatus (strain PC15) (Oyster mushroom)).